The sequence spans 349 residues: Lipoyl synthase (349 aa).

Residues Cys55, Cys60, Cys66, Cys81, Cys85, Cys88, and Ser292 each coordinate [4Fe-4S] cluster. Positions 67–281 constitute a Radical SAM core domain; that stretch reads WEDREATFLI…SDAAYELGIK (215 aa). The interval 321–349 is disordered; the sequence is LDSTTSQEASTLLERYGASEDTPVTASRR.

The protein belongs to the radical SAM superfamily. Lipoyl synthase family. It depends on [4Fe-4S] cluster as a cofactor.

The protein localises to the cytoplasm. The enzyme catalyses [[Fe-S] cluster scaffold protein carrying a second [4Fe-4S](2+) cluster] + N(6)-octanoyl-L-lysyl-[protein] + 2 oxidized [2Fe-2S]-[ferredoxin] + 2 S-adenosyl-L-methionine + 4 H(+) = [[Fe-S] cluster scaffold protein] + N(6)-[(R)-dihydrolipoyl]-L-lysyl-[protein] + 4 Fe(3+) + 2 hydrogen sulfide + 2 5'-deoxyadenosine + 2 L-methionine + 2 reduced [2Fe-2S]-[ferredoxin]. Its pathway is protein modification; protein lipoylation via endogenous pathway; protein N(6)-(lipoyl)lysine from octanoyl-[acyl-carrier-protein]: step 2/2. Its function is as follows. Catalyzes the radical-mediated insertion of two sulfur atoms into the C-6 and C-8 positions of the octanoyl moiety bound to the lipoyl domains of lipoate-dependent enzymes, thereby converting the octanoylated domains into lipoylated derivatives. The protein is Lipoyl synthase of Corynebacterium jeikeium (strain K411).